The primary structure comprises 70 residues: ATP synthase subunit c (70 aa).

2 helical membrane-spanning segments follow: residues 4 to 24 (IAAA…NGLI) and 49 to 69 (GIAL…LAFF).

Belongs to the ATPase C chain family. F-type ATPases have 2 components, F(1) - the catalytic core - and F(0) - the membrane proton channel. F(1) has five subunits: alpha(3), beta(3), gamma(1), delta(1), epsilon(1). F(0) has three main subunits: a(1), b(2) and c(10-14). The alpha and beta chains form an alternating ring which encloses part of the gamma chain. F(1) is attached to F(0) by a central stalk formed by the gamma and epsilon chains, while a peripheral stalk is formed by the delta and b chains. The F(1)F(0) complex interacts with SpoIIIJ and YqjG; YqgA is found in the same complex.

It localises to the cell membrane. Its function is as follows. F(1)F(0) ATP synthase produces ATP from ADP in the presence of a proton or sodium gradient. F-type ATPases consist of two structural domains, F(1) containing the extramembraneous catalytic core and F(0) containing the membrane proton channel, linked together by a central stalk and a peripheral stalk. During catalysis, ATP synthesis in the catalytic domain of F(1) is coupled via a rotary mechanism of the central stalk subunits to proton translocation. Key component of the F(0) channel; it plays a direct role in translocation across the membrane. A homomeric c-ring of between 10-14 subunits forms the central stalk rotor element with the F(1) delta and epsilon subunits. The sequence is that of ATP synthase subunit c from Bacillus subtilis (strain 168).